We begin with the raw amino-acid sequence, 313 residues long: Formimidoylglutamase (313 aa).

Mn(2+) is bound by residues H130, D155, H157, D159, D241, and D243.

Belongs to the arginase family. Mn(2+) serves as cofactor.

The catalysed reaction is N-formimidoyl-L-glutamate + H2O = formamide + L-glutamate. It participates in amino-acid degradation; L-histidine degradation into L-glutamate; L-glutamate from N-formimidoyl-L-glutamate (hydrolase route): step 1/1. Functionally, catalyzes the conversion of N-formimidoyl-L-glutamate to L-glutamate and formamide. This chain is Formimidoylglutamase, found in Salmonella heidelberg (strain SL476).